Here is a 153-residue protein sequence, read N- to C-terminus: Proline-rich membrane anchor 1 (153 aa).

The N-terminal stretch at 1-35 (MLLRDLVLRRGCCWSSLLLHCALHPLWGFVQVTHG) is a signal peptide. Topologically, residues 36–92 (EPQKSCSKVTDSCRHVCQCRPPPPLPPPPPPPPPPRLLSAPAPNSTSCPTEESWWSG) are extracellular. The PRAD domain maps to 56–70 (PPPPLPPPPPPPPPP). Positions 59–71 (PLPPPPPPPPPPR) are enriched in pro residues. The segment at 59–79 (PLPPPPPPPPPPRLLSAPAPN) is disordered. Asparagine 79 carries an N-linked (GlcNAc...) asparagine glycan. The chain crosses the membrane as a helical span at residues 93 to 113 (LVIIIAVCCASLVFLTVLVII). Residues 114–153 (CYKAIKRKPLRKDENGTSVAEYPMSASQSNKGVDVNNAVV) lie on the Cytoplasmic side of the membrane.

As to quaternary structure, interacts with ACHE, probably through disulfide bonds.

It is found in the cell membrane. The protein localises to the cell junction. Its subcellular location is the synapse. Functionally, required to anchor acetylcholinesterase (ACHE) to the basal lamina of the neuromuscular junction and to the membrane of neuronal synapses in brain. Also able to organize ACHE into tetramers. This is Proline-rich membrane anchor 1 (PRIMA1) from Homo sapiens (Human).